Here is a 508-residue protein sequence, read N- to C-terminus: Transposase (508 aa).

The HTH IS21-type domain maps to Leu-3–Leu-65. The Integrase catalytic domain maps to Leu-124–Val-299.

The protein belongs to the transposase IS21/IS408/IS1162 family.

Its function is as follows. Required for the transposition of the insertion element. This Aminobacter aminovorans (Chelatobacter heintzii) protein is Transposase (nmoT).